The following is a 294-amino-acid chain: uncharacterized protein (294 aa).

Positions 259–294 (LNAPTPIPPPITSHAGQEEALKPQRASKGKKAKARK) are disordered. Basic residues predominate over residues 283–294 (RASKGKKAKARK).

This is an uncharacterized protein from Homo sapiens (Human).